The chain runs to 1020 residues: Probable beta-galactosidase B (1020 aa).

The first 22 residues, 1-22 (MLISKTVLSGLALGASFVGVSA), serve as a signal peptide directing secretion. An N-linked (GlcNAc...) asparagine glycan is attached at Asn25. Position 90 (Tyr90) interacts with substrate. Asn111 is a glycosylation site (N-linked (GlcNAc...) asparagine). Positions 135, 136, and 137 each coordinate substrate. Asn172 carries N-linked (GlcNAc...) asparagine glycosylation. Asn195 is a substrate binding site. Glu196 acts as the Proton donor in catalysis. Asn210 and Asn251 each carry an N-linked (GlcNAc...) asparagine glycan. Tyr264 lines the substrate pocket. A disulfide bond links Cys270 and Cys323. N-linked (GlcNAc...) asparagine glycosylation is present at Asn271. The active-site Nucleophile is the Glu307. Tyr372 is a binding site for substrate. N-linked (GlcNAc...) asparagine glycans are attached at residues Asn410, Asn455, Asn549, Asn596, Asn625, Asn702, Asn747, Asn785, Asn819, Asn880, and Asn919.

Belongs to the glycosyl hydrolase 35 family.

The protein resides in the secreted. The catalysed reaction is Hydrolysis of terminal non-reducing beta-D-galactose residues in beta-D-galactosides.. Its function is as follows. Cleaves beta-linked terminal galactosyl residues from gangliosides, glycoproteins, and glycosaminoglycans. This Aspergillus flavus (strain ATCC 200026 / FGSC A1120 / IAM 13836 / NRRL 3357 / JCM 12722 / SRRC 167) protein is Probable beta-galactosidase B (lacB).